A 306-amino-acid polypeptide reads, in one-letter code: S-methyl-5'-thioadenosine phosphorylase (306 aa).

Phosphate-binding positions include Thr21, 63-64 (RH), and 96-97 (SA). Met198 contacts substrate. Ser199 is a phosphate binding site. 222 to 224 (DYD) contacts substrate.

This sequence belongs to the PNP/MTAP phosphorylase family. MTAP subfamily. In terms of assembly, homotrimer.

Its subcellular location is the cytoplasm. The protein localises to the nucleus. The enzyme catalyses S-methyl-5'-thioadenosine + phosphate = 5-(methylsulfanyl)-alpha-D-ribose 1-phosphate + adenine. It functions in the pathway amino-acid biosynthesis; L-methionine biosynthesis via salvage pathway; S-methyl-5-thio-alpha-D-ribose 1-phosphate from S-methyl-5'-thioadenosine (phosphorylase route): step 1/1. Its function is as follows. Catalyzes the reversible phosphorylation of S-methyl-5'-thioadenosine (MTA) to adenine and 5-methylthioribose-1-phosphate. Involved in the breakdown of MTA, a major by-product of polyamine biosynthesis. Responsible for the first step in the methionine salvage pathway after MTA has been generated from S-adenosylmethionine. Has broad substrate specificity with 6-aminopurine nucleosides as preferred substrates. This chain is S-methyl-5'-thioadenosine phosphorylase, found in Sclerotinia sclerotiorum (strain ATCC 18683 / 1980 / Ss-1) (White mold).